We begin with the raw amino-acid sequence, 152 residues long: Lipoprotein signal peptidase (152 aa).

The next 2 membrane-spanning stretches (helical) occupy residues 55–75 (NKMWFFYIITVVFVGFIVFYM) and 85–105 (LGISLGLILGGAIGNFIDRVF). Active-site residues include D111 and D129. A helical membrane pass occupies residues 124 to 144 (VFNIADSALCIGVVLIIIQTL).

This sequence belongs to the peptidase A8 family.

Its subcellular location is the cell membrane. It catalyses the reaction Release of signal peptides from bacterial membrane prolipoproteins. Hydrolyzes -Xaa-Yaa-Zaa-|-(S,diacylglyceryl)Cys-, in which Xaa is hydrophobic (preferably Leu), and Yaa (Ala or Ser) and Zaa (Gly or Ala) have small, neutral side chains.. Its pathway is protein modification; lipoprotein biosynthesis (signal peptide cleavage). Functionally, this protein specifically catalyzes the removal of signal peptides from prolipoproteins. This is Lipoprotein signal peptidase from Bacillus cytotoxicus (strain DSM 22905 / CIP 110041 / 391-98 / NVH 391-98).